The chain runs to 410 residues: Exodeoxyribonuclease 7 large subunit (410 aa).

It belongs to the XseA family. As to quaternary structure, heterooligomer composed of large and small subunits.

The protein localises to the cytoplasm. The enzyme catalyses Exonucleolytic cleavage in either 5'- to 3'- or 3'- to 5'-direction to yield nucleoside 5'-phosphates.. In terms of biological role, bidirectionally degrades single-stranded DNA into large acid-insoluble oligonucleotides, which are then degraded further into small acid-soluble oligonucleotides. The polypeptide is Exodeoxyribonuclease 7 large subunit (Alkaliphilus metalliredigens (strain QYMF)).